Here is a 306-residue protein sequence, read N- to C-terminus: Ribonuclease Z (306 aa).

Residues histidine 63, histidine 65, aspartate 67, histidine 68, histidine 141, aspartate 211, and histidine 269 each contribute to the Zn(2+) site. Aspartate 67 acts as the Proton acceptor in catalysis.

It belongs to the RNase Z family. As to quaternary structure, homodimer. Zn(2+) is required as a cofactor.

The enzyme catalyses Endonucleolytic cleavage of RNA, removing extra 3' nucleotides from tRNA precursor, generating 3' termini of tRNAs. A 3'-hydroxy group is left at the tRNA terminus and a 5'-phosphoryl group is left at the trailer molecule.. In terms of biological role, zinc phosphodiesterase, which displays some tRNA 3'-processing endonuclease activity. Probably involved in tRNA maturation, by removing a 3'-trailer from precursor tRNA. The chain is Ribonuclease Z from Staphylococcus aureus (strain Mu3 / ATCC 700698).